A 419-amino-acid polypeptide reads, in one-letter code: Histidine--tRNA ligase (419 aa).

It belongs to the class-II aminoacyl-tRNA synthetase family. As to quaternary structure, homodimer.

It localises to the cytoplasm. It catalyses the reaction tRNA(His) + L-histidine + ATP = L-histidyl-tRNA(His) + AMP + diphosphate + H(+). This is Histidine--tRNA ligase from Syntrophotalea carbinolica (strain DSM 2380 / NBRC 103641 / GraBd1) (Pelobacter carbinolicus).